Reading from the N-terminus, the 437-residue chain is La-related protein 7 homolog (437 aa).

Residues 38–145 form the HTH La-type RNA-binding domain; that stretch reads SKSPSLTIPK…KRKKKFDNRT (108 aa). A xRRM domain is found at 279–397; that stretch reads ELSQSCFLKI…QRSSIDEIKA (119 aa). The span at 417 to 427 shows a compositional bias: basic residues; that stretch reads RRPVSKRKNKA. Residues 417-437 form a disordered region; it reads RRPVSKRKNKAINKMSTEVKK.

The protein belongs to the LARP7 family. As to quaternary structure, component of the telomerase holoenzyme complex composed minimally of the catalytic subunit p123 and the telomerase RNA template component. Post-translationally, the mature form of the protein is a protein of 43 kDa, which is derived from a 51 kDa precursor by proteolytic cleavage.

It is found in the nucleus. The protein resides in the chromosome. The protein localises to the telomere. RNA-binding protein required for assembly of the holoenzyme telomerase ribonucleoprotein (RNP) complex. Specifically binds telomerase RNA and promotes its assembly with catalytic subunit p123, thereby stimulating enzymatic activity and processivity of p123. Telomerase is a ribonucleoprotein enzyme essential that copies new telomeric repeats onto chromosome ends and functions to maintain cell division. The sequence is that of La-related protein 7 homolog from Euplotes aediculatus (Ciliate).